Here is a 436-residue protein sequence, read N- to C-terminus: Anhydro-N-acetylmuramic acid kinase (436 aa).

32–39 lines the ATP pocket; sequence GTSLDGMD.

It belongs to the anhydro-N-acetylmuramic acid kinase family.

The catalysed reaction is 1,6-anhydro-N-acetyl-beta-muramate + ATP + H2O = N-acetyl-D-muramate 6-phosphate + ADP + H(+). It functions in the pathway amino-sugar metabolism; 1,6-anhydro-N-acetylmuramate degradation. It participates in cell wall biogenesis; peptidoglycan recycling. In terms of biological role, catalyzes the specific phosphorylation of 1,6-anhydro-N-acetylmuramic acid (anhMurNAc) with the simultaneous cleavage of the 1,6-anhydro ring, generating MurNAc-6-P. Is required for the utilization of anhMurNAc either imported from the medium or derived from its own cell wall murein, and thus plays a role in cell wall recycling. This chain is Anhydro-N-acetylmuramic acid kinase, found in Psychrobacter arcticus (strain DSM 17307 / VKM B-2377 / 273-4).